The following is a 520-amino-acid chain: Interferon lambda receptor 1 (520 aa).

Residues 1–20 form the signal peptide; the sequence is MAGPERWGPLLLCLLQAAPG. Topologically, residues 21 to 228 are extracellular; sequence RPRLAPPQNV…LLEVPEANWA (208 aa). The 101-residue stretch at 26–126 folds into the Fibronectin type-III domain; that stretch reads PPQNVTLLSQ…LDYLFEVEPA (101 aa). Asparagine 29 and asparagine 36 each carry an N-linked (GlcNAc...) asparagine glycan. 2 disulfides stabilise this stretch: cysteine 74–cysteine 82 and cysteine 86–cysteine 150. N-linked (GlcNAc...) asparagine glycosylation is found at asparagine 142 and asparagine 169. A disulfide bond links cysteine 195 and cysteine 217. A helical transmembrane segment spans residues 229–249; sequence FLVLPSLLILLLVIAAGGVIW. Residues 250 to 520 are Cytoplasmic-facing; it reads KTLMGNPWFQ…GRTLGHYMAR (271 aa). Disordered regions lie at residues 302–439 and 477–520; these read VRPT…FLEE and ESSP…YMAR. Acidic residues predominate over residues 323 to 336; that stretch reads AEDEEEEDEEDTED. Residues 380 to 392 are compositionally biased toward low complexity; sequence SSAWDSSDRSWAS. A compositionally biased stretch (acidic residues) spans 479–495; it reads SPEEEEEARESEIEDSD.

Belongs to the type II cytokine receptor family. Heterodimer with IL10RB. Ubiquitinated by FBXO45-containing E3 ligase leading to proteasomal degradation. In terms of tissue distribution, widely expressed.

The protein resides in the membrane. Functionally, the IFNLR1/IL10RB dimer is a receptor for the cytokine ligands IFNL2 and IFNL3 and mediates their antiviral activity. The ligand/receptor complex stimulate the activation of the JAK/STAT signaling pathway leading to the expression of IFN-stimulated genes (ISG), which contribute to the antiviral state. Determines the cell type specificity of the lambda interferon action. Shows a more restricted pattern of expression in the epithelial tissues thereby limiting responses to lambda interferons primarily to epithelial cells of the respiratory, gastrointestinal, and reproductive tracts. Seems not to be essential for early virus-activated host defense in vaginal infection, but plays an important role in Toll-like receptor (TLR)-induced antiviral defense. Plays a significant role in the antiviral immune defense in the intestinal epithelium. In Homo sapiens (Human), this protein is Interferon lambda receptor 1 (IFNLR1).